The sequence spans 246 residues: tRNA (guanine-N(1)-)-methyltransferase (246 aa).

Residues Gly112 and 131-136 (IGDYVL) each bind S-adenosyl-L-methionine.

It belongs to the RNA methyltransferase TrmD family. As to quaternary structure, homodimer.

Its subcellular location is the cytoplasm. It carries out the reaction guanosine(37) in tRNA + S-adenosyl-L-methionine = N(1)-methylguanosine(37) in tRNA + S-adenosyl-L-homocysteine + H(+). Functionally, specifically methylates guanosine-37 in various tRNAs. This Thermosipho melanesiensis (strain DSM 12029 / CIP 104789 / BI429) protein is tRNA (guanine-N(1)-)-methyltransferase.